Reading from the N-terminus, the 175-residue chain is tRNA (cytidine(56)-2'-O)-methyltransferase (175 aa).

L82 lines the S-adenosyl-L-methionine pocket.

This sequence belongs to the aTrm56 family. Homodimer.

It localises to the cytoplasm. The enzyme catalyses cytidine(56) in tRNA + S-adenosyl-L-methionine = 2'-O-methylcytidine(56) in tRNA + S-adenosyl-L-homocysteine + H(+). In terms of biological role, specifically catalyzes the AdoMet-dependent 2'-O-ribose methylation of cytidine at position 56 in tRNAs. The chain is tRNA (cytidine(56)-2'-O)-methyltransferase from Cenarchaeum symbiosum (strain A).